A 424-amino-acid polypeptide reads, in one-letter code: Phosphomethylpyrimidine synthase (424 aa).

Residues M94, Y123, H162, 184 to 186 (SRG), 225 to 228 (NGMR), and E264 contribute to the substrate site. H268 is a Zn(2+) binding site. Position 291 (Y291) interacts with substrate. H332 serves as a coordination point for Zn(2+). [4Fe-4S] cluster contacts are provided by C406, C409, and C413.

It belongs to the ThiC family. [4Fe-4S] cluster serves as cofactor.

The catalysed reaction is 5-amino-1-(5-phospho-beta-D-ribosyl)imidazole + S-adenosyl-L-methionine = 4-amino-2-methyl-5-(phosphooxymethyl)pyrimidine + CO + 5'-deoxyadenosine + formate + L-methionine + 3 H(+). It participates in cofactor biosynthesis; thiamine diphosphate biosynthesis. In terms of biological role, catalyzes the synthesis of the hydroxymethylpyrimidine phosphate (HMP-P) moiety of thiamine from aminoimidazole ribotide (AIR) in a radical S-adenosyl-L-methionine (SAM)-dependent reaction. This is Phosphomethylpyrimidine synthase from Methanosphaerula palustris (strain ATCC BAA-1556 / DSM 19958 / E1-9c).